We begin with the raw amino-acid sequence, 654 residues long: Acetyl-coenzyme A synthetase (654 aa).

Residues 193-196 (RRGK) and Thr-313 each bind CoA. ATP is bound by residues 389–391 (GEP), 413–418 (DTWWQT), Asp-506, and Arg-521. Residue Ser-529 coordinates CoA. Arg-532 contributes to the ATP binding site. Residues His-545 and Val-548 each contribute to the Mg(2+) site. Lys-619 carries the N6-acetyllysine modification.

The protein belongs to the ATP-dependent AMP-binding enzyme family. Requires Mg(2+) as cofactor. Acetylated. Deacetylation by the SIR2-homolog deacetylase activates the enzyme.

It catalyses the reaction acetate + ATP + CoA = acetyl-CoA + AMP + diphosphate. Catalyzes the conversion of acetate into acetyl-CoA (AcCoA), an essential intermediate at the junction of anabolic and catabolic pathways. AcsA undergoes a two-step reaction. In the first half reaction, AcsA combines acetate with ATP to form acetyl-adenylate (AcAMP) intermediate. In the second half reaction, it can then transfer the acetyl group from AcAMP to the sulfhydryl group of CoA, forming the product AcCoA. The polypeptide is Acetyl-coenzyme A synthetase (Wolinella succinogenes (strain ATCC 29543 / DSM 1740 / CCUG 13145 / JCM 31913 / LMG 7466 / NCTC 11488 / FDC 602W) (Vibrio succinogenes)).